Here is a 198-residue protein sequence, read N- to C-terminus: Pyridoxine/pyridoxamine 5'-phosphate oxidase (198 aa).

Residues 47–52 (RMVLVK), 62–63 (FT), Arg68, Lys69, and Gln91 each bind FMN. A substrate-binding site is contributed by Lys52. Residues Tyr109, Arg113, and Ser117 each contribute to the substrate site. FMN-binding positions include 126–127 (QS) and Trp171. Position 177–179 (177–179 (RLH)) interacts with substrate. Arg181 is a binding site for FMN.

The protein belongs to the pyridoxamine 5'-phosphate oxidase family. In terms of assembly, homodimer. It depends on FMN as a cofactor.

It catalyses the reaction pyridoxamine 5'-phosphate + O2 + H2O = pyridoxal 5'-phosphate + H2O2 + NH4(+). The enzyme catalyses pyridoxine 5'-phosphate + O2 = pyridoxal 5'-phosphate + H2O2. Its pathway is cofactor metabolism; pyridoxal 5'-phosphate salvage; pyridoxal 5'-phosphate from pyridoxamine 5'-phosphate: step 1/1. It participates in cofactor metabolism; pyridoxal 5'-phosphate salvage; pyridoxal 5'-phosphate from pyridoxine 5'-phosphate: step 1/1. Its function is as follows. Catalyzes the oxidation of either pyridoxine 5'-phosphate (PNP) or pyridoxamine 5'-phosphate (PMP) into pyridoxal 5'-phosphate (PLP). The polypeptide is Pyridoxine/pyridoxamine 5'-phosphate oxidase (Anaeromyxobacter dehalogenans (strain 2CP-C)).